A 429-amino-acid chain; its full sequence is Enolase (429 aa).

Q163 is a (2R)-2-phosphoglycerate binding site. E205 serves as the catalytic Proton donor. Positions 242, 285, and 312 each coordinate Mg(2+). Positions 337, 366, 367, and 388 each coordinate (2R)-2-phosphoglycerate. Residue K337 is the Proton acceptor of the active site.

Belongs to the enolase family. In terms of assembly, component of the RNA degradosome, a multiprotein complex involved in RNA processing and mRNA degradation. Mg(2+) is required as a cofactor.

The protein resides in the cytoplasm. It is found in the secreted. Its subcellular location is the cell surface. It carries out the reaction (2R)-2-phosphoglycerate = phosphoenolpyruvate + H2O. The protein operates within carbohydrate degradation; glycolysis; pyruvate from D-glyceraldehyde 3-phosphate: step 4/5. Catalyzes the reversible conversion of 2-phosphoglycerate (2-PG) into phosphoenolpyruvate (PEP). It is essential for the degradation of carbohydrates via glycolysis. In Alkalilimnicola ehrlichii (strain ATCC BAA-1101 / DSM 17681 / MLHE-1), this protein is Enolase.